A 274-amino-acid chain; its full sequence is Dermonecrotic toxin SdSicTox-betaIIB1bii (274 aa).

Histidine 5 is a catalytic residue. Glutamate 25 and aspartate 27 together coordinate Mg(2+). Residue histidine 41 is the Nucleophile of the active site. 2 cysteine pairs are disulfide-bonded: cysteine 45/cysteine 51 and cysteine 47/cysteine 190. Aspartate 85 contacts Mg(2+).

This sequence belongs to the arthropod phospholipase D family. Class II subfamily. Mg(2+) is required as a cofactor. Expressed by the venom gland.

It localises to the secreted. It catalyses the reaction an N-(acyl)-sphingosylphosphocholine = an N-(acyl)-sphingosyl-1,3-cyclic phosphate + choline. The catalysed reaction is an N-(acyl)-sphingosylphosphoethanolamine = an N-(acyl)-sphingosyl-1,3-cyclic phosphate + ethanolamine. The enzyme catalyses a 1-acyl-sn-glycero-3-phosphocholine = a 1-acyl-sn-glycero-2,3-cyclic phosphate + choline. It carries out the reaction a 1-acyl-sn-glycero-3-phosphoethanolamine = a 1-acyl-sn-glycero-2,3-cyclic phosphate + ethanolamine. Dermonecrotic toxins cleave the phosphodiester linkage between the phosphate and headgroup of certain phospholipids (sphingolipid and lysolipid substrates), forming an alcohol (often choline) and a cyclic phosphate. This toxin acts on sphingomyelin (SM). It may also act on ceramide phosphoethanolamine (CPE), lysophosphatidylcholine (LPC) and lysophosphatidylethanolamine (LPE), but not on lysophosphatidylserine (LPS), and lysophosphatidylglycerol (LPG). It acts by transphosphatidylation, releasing exclusively cyclic phosphate products as second products. Induces dermonecrosis, hemolysis, increased vascular permeability, edema, inflammatory response, and platelet aggregation. The chain is Dermonecrotic toxin SdSicTox-betaIIB1bii from Sicarius cf. damarensis (strain GJB-2008) (Six-eyed sand spider).